The following is a 710-amino-acid chain: Adenylosuccinate synthetase (710 aa).

Disordered regions lie at residues 1–57 and 82–112; these read MPVR…NHAK and MDDE…SAQC. Over residues 11–25 the composition is skewed to low complexity; it reads NNSSSGVSNALSSSS. Polar residues predominate over residues 32 to 43; that stretch reads SPSSRENSTPLS. GTP-binding positions include 180–186 and 210–212; these read GDEGKGK and GHT. Residue aspartate 181 is the Proton acceptor of the active site. Residues aspartate 181 and glycine 210 each coordinate Mg(2+). IMP contacts are provided by residues 181–184, 208–211, threonine 295, lysine 309, glutamine 421, threonine 437, and lysine 567; these read DEGK and NAGH. Catalysis depends on histidine 211, which acts as the Proton donor. Position 563–569 (563–569) interacts with substrate; the sequence is AVTKKPR. GTP contacts are provided by residues arginine 569 and 697 to 699; that span reads GNG.

This sequence belongs to the adenylosuccinate synthetase family. Homodimer. Mg(2+) is required as a cofactor.

The protein localises to the cytoplasm. The catalysed reaction is IMP + L-aspartate + GTP = N(6)-(1,2-dicarboxyethyl)-AMP + GDP + phosphate + 2 H(+). The protein operates within purine metabolism; AMP biosynthesis via de novo pathway; AMP from IMP: step 1/2. Functionally, plays an important role in the salvage pathway for purine nucleotide biosynthesis. Catalyzes the first committed step in the biosynthesis of AMP from IMP. The chain is Adenylosuccinate synthetase from Leishmania braziliensis.